Here is a 208-residue protein sequence, read N- to C-terminus: Large ribosomal subunit protein uL3 (208 aa).

A disordered region spans residues 116–148; it reads GFQGVIKRHGQSRGPMAHGSRYHRRPGSMGPVA.

The protein belongs to the universal ribosomal protein uL3 family. As to quaternary structure, part of the 50S ribosomal subunit. Forms a cluster with proteins L14 and L19.

Functionally, one of the primary rRNA binding proteins, it binds directly near the 3'-end of the 23S rRNA, where it nucleates assembly of the 50S subunit. The protein is Large ribosomal subunit protein uL3 of Streptococcus pyogenes serotype M5 (strain Manfredo).